The chain runs to 453 residues: Zinc finger protein Pegasus (453 aa).

3 C2H2-type zinc fingers span residues 101 to 123 (LKCR…IRIH), 129 to 151 (HRCH…MRSH), and 157 to 180 (YKCE…RRKH). Positions 279–293 (GQLSSLPPDTQNPAS) are enriched in polar residues. Residues 279–375 (GQLSSLPPDT…QPSTPAPALP (97 aa)) are disordered. The segment covering 315–332 (CSSAVSTSVAQSSSPASP) has biased composition (low complexity). Positions 356–368 (RTSTPSISNSQPS) are enriched in polar residues. 2 consecutive C2H2-type zinc fingers follow at residues 383–405 (HHCQ…MGCH) and 411–438 (FQCN…CCQH).

This sequence belongs to the Ikaros C2H2-type zinc-finger protein family. Probably self-associates.

Its subcellular location is the nucleus. In terms of biological role, transcriptional repressor that binds the core 5'GNNTGTNG-3' DNA consensus sequence. This chain is Zinc finger protein Pegasus (ikzf5), found in Xenopus laevis (African clawed frog).